The sequence spans 492 residues: Alpha-amylase-related protein (492 aa).

The N-terminal stretch at M1–A18 is a signal peptide. A Pyrrolidone carboxylic acid modification is found at Q19. A disulfide bridge links C46 with C102. Ca(2+) contacts are provided by N116, Q167, and D176. Residues C155 and C169 are joined by a disulfide bond. R204 serves as a coordination point for chloride. Catalysis depends on D206, which acts as the Nucleophile. Ca(2+) is bound at residue H210. E243 functions as the Proton donor in the catalytic mechanism. N306 and R341 together coordinate chloride. Intrachain disulfides connect C374/C380, C416/C439, and C446/C458.

Belongs to the glycosyl hydrolase 13 family. As to quaternary structure, monomer. Requires Ca(2+) as cofactor. It depends on chloride as a cofactor.

It is found in the secreted. It carries out the reaction Endohydrolysis of (1-&gt;4)-alpha-D-glucosidic linkages in polysaccharides containing three or more (1-&gt;4)-alpha-linked D-glucose units.. This chain is Alpha-amylase-related protein (Amyrel), found in Drosophila willistoni (Fruit fly).